The sequence spans 279 residues: Phospholipase A and acyltransferase 5 (279 aa).

Disordered regions lie at residues 1-53 (MGLS…GLNS) and 70-117 (QLPA…ENEG). Over residues 97–106 (LETTPSQKAD) the composition is skewed to polar residues. One can recognise an LRAT domain in the interval 135–249 (LIEIFRIGYE…LRYGVPRSQQ (115 aa)). Residues His-145 and His-157 contribute to the active site. Cys-233 serves as the catalytic Acyl-thioester intermediate.

Belongs to the H-rev107 family. As to expression, highest expression level in testis and pancreas.

It is found in the cytoplasm. Its subcellular location is the cytosol. The enzyme catalyses a 1,2-diacyl-sn-glycero-3-phosphocholine + H2O = a 1-acyl-sn-glycero-3-phosphocholine + a fatty acid + H(+). It catalyses the reaction a 1,2-diacyl-sn-glycero-3-phosphocholine + H2O = a 2-acyl-sn-glycero-3-phosphocholine + a fatty acid + H(+). The catalysed reaction is 1-hexadecanoyl-2-(5Z,8Z,11Z,14Z-eicosatetraenoyl)-sn-glycero-3-phosphocholine + 1,2-di-(9Z-octadecenoyl)-sn-glycero-3-phosphoethanolamine = N-(5Z,8Z,11Z,14Z-eicosatetraenoyl)-1,2-di-(9Z-octadecenoyl)-sn-glycero-3-phosphoethanolamine + 1-hexadecanoyl-sn-glycero-3-phosphocholine + H(+). It carries out the reaction 1,2-di-(9Z-octadecenoyl)-sn-glycero-3-phosphoethanolamine + 1,2-dihexadecanoyl-sn-glycero-3-phosphocholine = N-hexadecanoyl-1,2-di-(9Z-octadecenoyl)-sn-glycero-3-phosphoethanolamine + 1-hexadecanoyl-sn-glycero-3-phosphocholine + H(+). The enzyme catalyses 1,2-di-(9Z-octadecenoyl)-sn-glycero-3-phosphoethanolamine + 1,2-dihexadecanoyl-sn-glycero-3-phosphocholine = N-hexadecanoyl-1,2-di-(9Z-octadecenoyl)-sn-glycero-3-phosphoethanolamine + 2-hexadecanoyl-sn-glycero-3-phosphocholine + H(+). It catalyses the reaction a 1,2-diacyl-sn-glycero-3-phosphoethanolamine + a 1,2-diacyl-sn-glycero-3-phosphocholine = an N-acyl-1,2-diacyl-sn-glycero-3-phosphoethanolamine + a 1-acyl-sn-glycero-3-phosphocholine + H(+). The catalysed reaction is a 1,2-diacyl-sn-glycero-3-phosphoethanolamine + a 1,2-diacyl-sn-glycero-3-phosphocholine = an N-acyl-1,2-diacyl-sn-glycero-3-phosphoethanolamine + a 2-acyl-sn-glycero-3-phosphocholine + H(+). It carries out the reaction 1-hexadecanoyl-2-(9Z-octadecenoyl)-sn-glycero-3-phosphocholine + 1,2-di-(9Z-octadecenoyl)-sn-glycero-3-phosphoethanolamine = N,1,2-tri-(9Z-octadecenoyl)-sn-glycero-3-phosphoethanolamine + 1-hexadecanoyl-sn-glycero-3-phosphocholine + H(+). Functionally, exhibits both phospholipase A1/2 and acyltransferase activities. Shows phospholipase A1 (PLA1) and A2 (PLA2) activity, catalyzing the calcium-independent release of fatty acids from the sn-1 or sn-2 position of glycerophospholipids. Shows N-acyltransferase activity, catalyzing the calcium-independent transfer of a fatty acyl group at the sn-1 position of phosphatidylcholine (PC) and other glycerophospholipids to the primary amine of phosphatidylethanolamine (PE), forming N-acylphosphatidylethanolamine (NAPE), which serves as precursor for N-acylethanolamines (NAEs). The protein is Phospholipase A and acyltransferase 5 of Homo sapiens (Human).